The chain runs to 96 residues: Co-chaperonin GroES (96 aa).

This sequence belongs to the GroES chaperonin family. As to quaternary structure, heptamer of 7 subunits arranged in a ring. Interacts with the chaperonin GroEL.

It localises to the cytoplasm. Functionally, together with the chaperonin GroEL, plays an essential role in assisting protein folding. The GroEL-GroES system forms a nano-cage that allows encapsulation of the non-native substrate proteins and provides a physical environment optimized to promote and accelerate protein folding. GroES binds to the apical surface of the GroEL ring, thereby capping the opening of the GroEL channel. This is Co-chaperonin GroES from Idiomarina loihiensis (strain ATCC BAA-735 / DSM 15497 / L2-TR).